A 307-amino-acid chain; its full sequence is UDP-N-acetylenolpyruvoylglucosamine reductase (307 aa).

One can recognise an FAD-binding PCMH-type domain in the interval 29–197 (RVGGPAEWFA…LSARFRLDPG (169 aa)). Residue arginine 176 is part of the active site. The Proton donor role is filled by serine 227. The active site involves glutamate 297.

The protein belongs to the MurB family. FAD is required as a cofactor.

It localises to the cytoplasm. The enzyme catalyses UDP-N-acetyl-alpha-D-muramate + NADP(+) = UDP-N-acetyl-3-O-(1-carboxyvinyl)-alpha-D-glucosamine + NADPH + H(+). It functions in the pathway cell wall biogenesis; peptidoglycan biosynthesis. Functionally, cell wall formation. This is UDP-N-acetylenolpyruvoylglucosamine reductase from Prochlorococcus marinus (strain MIT 9313).